The primary structure comprises 257 residues: uncharacterized protein (257 aa).

A helical transmembrane segment spans residues 7–27 (LFLCVSFLLITIFIGGGGFMN).

Belongs to the staphylococcal tandem lipoprotein family.

It is found in the cell membrane. This is an uncharacterized protein from Staphylococcus epidermidis (strain ATCC 12228 / FDA PCI 1200).